The primary structure comprises 204 residues: GTP cyclohydrolase 1 (204 aa).

Zn(2+) is bound by residues Cys92, His95, and Cys165.

It belongs to the GTP cyclohydrolase I family. As to quaternary structure, homomer.

The enzyme catalyses GTP + H2O = 7,8-dihydroneopterin 3'-triphosphate + formate + H(+). It participates in cofactor biosynthesis; 7,8-dihydroneopterin triphosphate biosynthesis; 7,8-dihydroneopterin triphosphate from GTP: step 1/1. The protein is GTP cyclohydrolase 1 of Mycobacteroides abscessus (strain ATCC 19977 / DSM 44196 / CCUG 20993 / CIP 104536 / JCM 13569 / NCTC 13031 / TMC 1543 / L948) (Mycobacterium abscessus).